The sequence spans 431 residues: Serine--tRNA ligase (431 aa).

Position 235-237 (235-237 (TAE)) interacts with L-serine. Residues 266-268 (RRE) and valine 282 contribute to the ATP site. Glutamate 289 provides a ligand contact to L-serine. 353 to 356 (EASS) is a binding site for ATP. Serine 389 contributes to the L-serine binding site.

Belongs to the class-II aminoacyl-tRNA synthetase family. Type-1 seryl-tRNA synthetase subfamily. As to quaternary structure, homodimer. The tRNA molecule binds across the dimer.

The protein localises to the cytoplasm. The catalysed reaction is tRNA(Ser) + L-serine + ATP = L-seryl-tRNA(Ser) + AMP + diphosphate + H(+). It catalyses the reaction tRNA(Sec) + L-serine + ATP = L-seryl-tRNA(Sec) + AMP + diphosphate + H(+). The protein operates within aminoacyl-tRNA biosynthesis; selenocysteinyl-tRNA(Sec) biosynthesis; L-seryl-tRNA(Sec) from L-serine and tRNA(Sec): step 1/1. Catalyzes the attachment of serine to tRNA(Ser). Is also able to aminoacylate tRNA(Sec) with serine, to form the misacylated tRNA L-seryl-tRNA(Sec), which will be further converted into selenocysteinyl-tRNA(Sec). This is Serine--tRNA ligase from Pelodictyon phaeoclathratiforme (strain DSM 5477 / BU-1).